The following is a 236-amino-acid chain: Small ribosomal subunit protein uS2c (236 aa).

It belongs to the universal ribosomal protein uS2 family.

Its subcellular location is the plastid. It localises to the chloroplast. The chain is Small ribosomal subunit protein uS2c (rps2) from Pisum sativum (Garden pea).